The following is a 393-amino-acid chain: Chalcone synthase (393 aa).

The active site involves cysteine 164.

It belongs to the thiolase-like superfamily. Chalcone/stilbene synthases family.

It carries out the reaction (E)-4-coumaroyl-CoA + 3 malonyl-CoA + 3 H(+) = 2',4,4',6'-tetrahydroxychalcone + 3 CO2 + 4 CoA. It participates in secondary metabolite biosynthesis; flavonoid biosynthesis. The primary product of this enzyme is 4,2',4',6'-tetrahydroxychalcone (also termed naringenin-chalcone or chalcone) which can under specific conditions spontaneously isomerize into naringenin. The sequence is that of Chalcone synthase (CHS) from Vitis vinifera (Grape).